The sequence spans 141 residues: ATP synthase epsilon chain (141 aa).

It belongs to the ATPase epsilon chain family. In terms of assembly, F-type ATPases have 2 components, CF(1) - the catalytic core - and CF(0) - the membrane proton channel. CF(1) has five subunits: alpha(3), beta(3), gamma(1), delta(1), epsilon(1). CF(0) has three main subunits: a, b and c.

It localises to the cell inner membrane. Its function is as follows. Produces ATP from ADP in the presence of a proton gradient across the membrane. The chain is ATP synthase epsilon chain from Cellvibrio japonicus (strain Ueda107) (Pseudomonas fluorescens subsp. cellulosa).